Here is a 191-residue protein sequence, read N- to C-terminus: uncharacterized protein (191 aa).

This is an uncharacterized protein from Arabidopsis thaliana (Mouse-ear cress).